The following is a 237-amino-acid chain: MEKKALVYTGKAKKLYQTENAAVLFVEYLDQATALNGQKKDKVLGKGALNNQITSLIFEHLQQQKIPNHFIKKVSEHEQLIQVVEMIPLEVVVRNYAAGSFSKRLAIEEGTKLVTPIIEFYYKEDRLDDPFINEDHIQFLKVATPAEIVEIKALALQINQALSQLFQRLNICLIDFKIEIGRTKANQLLLADEISPDTCRLWDLNTNEHLDKDVYRRELGEIVPVYEEVLQRLLTAN.

It belongs to the SAICAR synthetase family.

The catalysed reaction is 5-amino-1-(5-phospho-D-ribosyl)imidazole-4-carboxylate + L-aspartate + ATP = (2S)-2-[5-amino-1-(5-phospho-beta-D-ribosyl)imidazole-4-carboxamido]succinate + ADP + phosphate + 2 H(+). Its pathway is purine metabolism; IMP biosynthesis via de novo pathway; 5-amino-1-(5-phospho-D-ribosyl)imidazole-4-carboxamide from 5-amino-1-(5-phospho-D-ribosyl)imidazole-4-carboxylate: step 1/2. The sequence is that of Phosphoribosylaminoimidazole-succinocarboxamide synthase from Enterococcus faecalis (strain ATCC 700802 / V583).